The sequence spans 158 residues: Snaclec convulxin subunit alpha (158 aa).

Positions 1 to 23 (MGRFIFVSFGLLVLFLSLSGTGA) are cleaved as a signal peptide. 3 disulfides stabilise this stretch: Cys-27-Cys-38, Cys-55-Cys-152, and Cys-127-Cys-144. Positions 34-158 (YDQHCYRIFN…PFVCKFPPQC (125 aa)) constitute a C-type lectin domain.

It belongs to the snaclec family. As to quaternary structure, tetramer of heterodimers of alpha and beta subunits (alphabeta)(4); disulfide-linked. In terms of tissue distribution, expressed by the venom gland.

The protein resides in the secreted. In terms of biological role, snake venom lectin that activates platelets by binding to the platelet collagen receptor glycoprotein VI (GP6). The indirect activation of integrin alpha-IIb/beta-3 (ITGA2B/ITGB3) also induced by the toxin is upstream the cytoskeletal translocation of GPIb, FcRgamma (FCER1G) and 14-3-3zeta (YWHAZ). This chain is Snaclec convulxin subunit alpha, found in Crotalus durissus terrificus (South American rattlesnake).